Consider the following 454-residue polypeptide: uncharacterized protein (454 aa).

Residues C73, C79, C82, and C154 each coordinate [4Fe-4S] cluster. Residues Q279, F307, D328, and D381 each coordinate S-adenosyl-L-methionine. The Nucleophile role is filled by C408.

This sequence belongs to the class I-like SAM-binding methyltransferase superfamily. RNA M5U methyltransferase family.

This is an uncharacterized protein from Leptospira interrogans serogroup Icterohaemorrhagiae serovar Lai (strain 56601).